We begin with the raw amino-acid sequence, 502 residues long: uncharacterized protein (502 aa).

Residues 1–21 traverse the membrane as a helical segment; that stretch reads MKIFLVILSVFFFNGCFGLAY. PLD phosphodiesterase domains are found at residues 162–189 and 396–423; these read IKKRMHNKLFIVDNFAVIIGGRNIGDNY and TKHSLHGKTIVFDDALTLLGSFNIDPRS.

Belongs to the phospholipase D family. Cardiolipin synthase subfamily.

It is found in the cell membrane. This is an uncharacterized protein from Helicobacter pylori (strain J99 / ATCC 700824) (Campylobacter pylori J99).